A 471-amino-acid polypeptide reads, in one-letter code: Protein translocase subunit SecF (471 aa).

The segment at 1–29 (MVSRAKVGAETTKGIDEPDRNDNTDDNGA) is disordered. Residues 13–23 (KGIDEPDRNDN) are compositionally biased toward basic and acidic residues. A run of 6 helical transmembrane segments spans residues 88–108 (GGVI…TFGI), 211–231 (ITKK…LYIT), 242–262 (ALTT…LVGF), 267–287 (ATVI…VIVF), 325–345 (LISV…LGVG), and 355–375 (LVGI…LLVT). Residues 393–471 (RRTLGSQVGK…TGKRNNVGRR (79 aa)) are disordered. Over residues 415–431 (KPQNQAESCADASSQEG) the composition is skewed to polar residues. Positions 448–460 (PGVRPVRPTGTRR) are enriched in low complexity. A compositionally biased stretch (basic residues) spans 461–471 (PTGKRNNVGRR).

The protein belongs to the SecD/SecF family. SecF subfamily. In terms of assembly, forms a complex with SecD. Part of the essential Sec protein translocation apparatus which comprises SecA, SecYEG and auxiliary proteins SecDF. Other proteins may also be involved.

The protein resides in the cell membrane. In terms of biological role, part of the Sec protein translocase complex. Interacts with the SecYEG preprotein conducting channel. SecDF uses the proton motive force (PMF) to complete protein translocation after the ATP-dependent function of SecA. This chain is Protein translocase subunit SecF, found in Mycobacterium leprae (strain TN).